Consider the following 1019-residue polypeptide: Probable ubiquitination network signaling protein acrB (1019 aa).

Disordered regions lie at residues Met1 to Leu94 and Asn109 to Ser143. Polar residues predominate over residues Gln30–Gly43. The segment covering Ser44–Val66 has biased composition (low complexity). Polar residues-rich tracts occupy residues Pro68–Ser83 and Ser131–Ser143. Helical transmembrane passes span Ile163 to Leu183, Leu216 to Thr236, and Phe259 to Val279. 5 disordered regions span residues Ala343–Gln371, Asp580–Thr603, Leu831–Leu855, Ser879–Leu905, and Asp963–Asn1019. The span at Asp580 to Thr589 shows a compositional bias: polar residues. A coiled-coil region spans residues Thr602–Ala788. The segment covering Arg992–Ser1008 has biased composition (gly residues).

The protein belongs to the acrB family.

The protein localises to the membrane. Component of the regulatory network controlling carbon source utilization through ubiquitination and deubiquitination involving creA, creB, creC, creD and acrB. Involved in resistance to acriflavine, and required for normal growth on a range of sole carbon sources, including fructose, cellobiose, raffinose, and starch, and reduced utilization of amino acids, including GABA and beta-alanine, as sole carbon and nitrogen sources. The protein is Probable ubiquitination network signaling protein acrB (acrB) of Aspergillus fumigatus (strain ATCC MYA-4609 / CBS 101355 / FGSC A1100 / Af293) (Neosartorya fumigata).